The primary structure comprises 221 residues: 7-cyano-7-deazaguanine synthase (221 aa).

10-20 (FSGGQDSTTCL) lines the ATP pocket. C186, C195, C198, and C201 together coordinate Zn(2+).

Belongs to the QueC family. In terms of assembly, homodimer. It depends on Zn(2+) as a cofactor.

The catalysed reaction is 7-carboxy-7-deazaguanine + NH4(+) + ATP = 7-cyano-7-deazaguanine + ADP + phosphate + H2O + H(+). The protein operates within purine metabolism; 7-cyano-7-deazaguanine biosynthesis. Its function is as follows. Catalyzes the ATP-dependent conversion of 7-carboxy-7-deazaguanine (CDG) to 7-cyano-7-deazaguanine (preQ(0)). The protein is 7-cyano-7-deazaguanine synthase of Geobacillus kaustophilus (strain HTA426).